A 75-amino-acid chain; its full sequence is Large ribosomal subunit protein bL31 (75 aa).

Positions 16, 18, 37, and 40 each coordinate Zn(2+).

Belongs to the bacterial ribosomal protein bL31 family. Type A subfamily. As to quaternary structure, part of the 50S ribosomal subunit. Zn(2+) is required as a cofactor.

Functionally, binds the 23S rRNA. The protein is Large ribosomal subunit protein bL31 of Legionella pneumophila (strain Paris).